A 47-amino-acid polypeptide reads, in one-letter code: PhoP/PhoQ regulator MgrB (47 aa).

A helical membrane pass occupies residues Trp-6–Val-26.

This sequence belongs to the MgrB family. As to quaternary structure, may form homooligomers. Probably interacts with the periplasmic domain of PhoQ.

It localises to the cell inner membrane. In terms of biological role, phoP-regulated transcription is redox-sensitive, being activated when the periplasm becomes more reducing. MgrB acts between DsbA/DsbB and PhoP/PhoQ in this pathway. Represses PhoP/PhoQ signaling, possibly by binding to the periplasmic domain of PhoQ, altering its activity and that of downstream effector PhoP. In Klebsiella pneumoniae (strain 342), this protein is PhoP/PhoQ regulator MgrB.